Reading from the N-terminus, the 272-residue chain is MLSVAARSGPFAPYLSAAAHAVPGPLKALAPAALRAEKVVLDLKRPLLCRESMSGRSARRDLVAGISLNAPASVRYVHNDVTVPDFSAYRREDVMDATTSSQTSSEDRKGFSYLVTATACVATAYAAKNVVTQFISSLSASADVLALSKIEIKLSDIPEGKNVAFKWRGKPLFVRHRTQAEINQEAEVDVSKLRDPQHDLDRVKKPEWVILVGVCTHLGCVPIANSGDFGGYYCPCHGSHYDASGRIRKGPAPYNLEVPTYQFVGDDLVVVG.

Residues 77–104 (VHNDVTVPDFSAYRREDVMDATTSSQTS) are Mitochondrial matrix-facing. Residues 105-138 (SEDRKGFSYLVTATACVATAYAAKNVVTQFISSL) traverse the membrane as a helical segment. Residues 139-272 (SASADVLALS…FVGDDLVVVG (134 aa)) are Mitochondrial intermembrane-facing. Residues 185-270 (EAEVDVSKLR…YQFVGDDLVV (86 aa)) form the Rieske domain. [2Fe-2S] cluster-binding residues include Cys215, His217, Leu218, Cys234, His237, and Ser239. An intrachain disulfide couples Cys220 to Cys236.

Belongs to the Rieske iron-sulfur protein family. Component of the ubiquinol-cytochrome c oxidoreductase (cytochrome b-c1 complex, complex III, CIII), a multisubunit enzyme composed of 11 subunits. The complex is composed of 3 respiratory subunits cytochrome b, cytochrome c1 and Rieske protein UQCRFS1, 2 core protein subunits UQCRC1/QCR1 and UQCRC2/QCR2, and 6 low-molecular weight protein subunits UQCRH/QCR6, UQCRB/QCR7, UQCRQ/QCR8, UQCR10/QCR9, UQCR11/QCR10 and subunit 9, the cleavage product of Rieske protein UQCRFS1. The complex exists as an obligatory dimer and forms supercomplexes (SCs) in the inner mitochondrial membrane with NADH-ubiquinone oxidoreductase (complex I, CI) and cytochrome c oxidase (complex IV, CIV), resulting in different assemblies (supercomplex SCI(1)III(2)IV(1) and megacomplex MCI(2)III(2)IV(2)). Incorporation of the Rieske protein UQCRFS1 is the penultimate step in complex III assembly. Interacts with TTC19, which is involved in the clearance of UQCRFS1 fragments. As to quaternary structure, component of the ubiquinol-cytochrome c oxidoreductase (cytochrome b-c1 complex, complex III, CIII). Subunit 9 corresponds to the mitochondrial targeting sequence (MTS) of Rieske protein UQCRFS1. It is retained after processing and incorporated inside complex III, where it remains bound to the complex and localizes between the 2 core subunits UQCRC1/QCR1 and UQCRC2/QCR2. Requires [2Fe-2S] cluster as cofactor. Proteolytic processing is necessary for the correct insertion of UQCRFS1 in the complex III dimer. Several fragments are generated during UQCRFS1 insertion, most probably due to the endogenous matrix-processing peptidase (MPP) activity of the 2 core protein subunits UQCRC1/QCR1 and UQCRC2/QCR2, which are homologous to the 2 mitochondrial-processing peptidase (MPP) subunits beta-MPP and alpha-MPP respectively. The action of the protease is also necessary for the clearance of the UQCRFS1 fragments.

It localises to the mitochondrion inner membrane. The enzyme catalyses a quinol + 2 Fe(III)-[cytochrome c](out) = a quinone + 2 Fe(II)-[cytochrome c](out) + 2 H(+)(out). Its function is as follows. Component of the ubiquinol-cytochrome c oxidoreductase, a multisubunit transmembrane complex that is part of the mitochondrial electron transport chain which drives oxidative phosphorylation. The respiratory chain contains 3 multisubunit complexes succinate dehydrogenase (complex II, CII), ubiquinol-cytochrome c oxidoreductase (cytochrome b-c1 complex, complex III, CIII) and cytochrome c oxidase (complex IV, CIV), that cooperate to transfer electrons derived from NADH and succinate to molecular oxygen, creating an electrochemical gradient over the inner membrane that drives transmembrane transport and the ATP synthase. The cytochrome b-c1 complex catalyzes electron transfer from ubiquinol to cytochrome c, linking this redox reaction to translocation of protons across the mitochondrial inner membrane, with protons being carried across the membrane as hydrogens on the quinol. In the process called Q cycle, 2 protons are consumed from the matrix, 4 protons are released into the intermembrane space and 2 electrons are passed to cytochrome c. The Rieske protein is a catalytic core subunit containing a [2Fe-2S] iron-sulfur cluster. It cycles between 2 conformational states during catalysis to transfer electrons from the quinol bound in the Q(0) site in cytochrome b to cytochrome c1. Incorporation of UQCRFS1 is the penultimate step in complex III assembly. Functionally, component of the ubiquinol-cytochrome c oxidoreductase (cytochrome b-c1 complex, complex III, CIII). UQCRFS1 undergoes proteolytic processing once it is incorporated in the complex III dimer. One of the fragments, called subunit 9, corresponds to its mitochondrial targeting sequence (MTS). The proteolytic processing is necessary for the correct insertion of UQCRFS1 in the complex III dimer, but the persistence of UQCRFS1-derived fragments may prevent newly imported UQCRFS1 to be processed and assembled into complex III and is detrimental for the complex III structure and function. In Gallus gallus (Chicken), this protein is Cytochrome b-c1 complex subunit Rieske, mitochondrial (UQCRFS1).